The sequence spans 330 residues: WRKY transcription factor WRKY51 (330 aa).

Residues 39–61 form a disordered region; it reads QTGTSERSPAPAPAQEQQQQQQV. Residues 51–60 are compositionally biased toward low complexity; the sequence is PAQEQQQQQQ. A Nuclear localization signal motif is present at residues 74–81; the sequence is FKKVISML. Disordered stretches follow at residues 91–117 and 302–330; these read RGPV…SAVS and YEGE…LPLA. Residues 101–117 show a composition bias toward low complexity; the sequence is PAASEPAPVRSSPSAVS. A DNA-binding region (WRKY) is located at residues 245 to 311; the sequence is KVADIPADDF…YEGEHRHTPS (67 aa). The span at 318–330 shows a compositional bias: pro residues; it reads PPAPPPPLALPLA.

This sequence belongs to the WRKY group II-a family. Highly expressed in aleurone cells. In seeds, predominantly present in the plumule, radicle and scutellum of the embryo.

It is found in the nucleus. Its function is as follows. Transcription factor. Interacts, when in complex with WRKY71, specifically with the W box (5'-(T)TGAC[CT]-3'), a frequently occurring elicitor-responsive cis-acting element. Represses specifically gibberellic acid (GA)-induced promoters in aleurone cells, probably by interfering with GAM1. The polypeptide is WRKY transcription factor WRKY51 (Oryza sativa subsp. indica (Rice)).